The sequence spans 428 residues: 3-phosphoshikimate 1-carboxyvinyltransferase (428 aa).

Positions 22, 23, and 27 each coordinate 3-phosphoshikimate. K22 lines the phosphoenolpyruvate pocket. 2 residues coordinate phosphoenolpyruvate: G94 and R122. 3-phosphoshikimate contacts are provided by S169, S170, Q171, S197, D315, and K342. A phosphoenolpyruvate-binding site is contributed by Q171. D315 serves as the catalytic Proton acceptor. Phosphoenolpyruvate is bound by residues R346, R389, and K414.

The protein belongs to the EPSP synthase family. As to quaternary structure, monomer.

It localises to the cytoplasm. It catalyses the reaction 3-phosphoshikimate + phosphoenolpyruvate = 5-O-(1-carboxyvinyl)-3-phosphoshikimate + phosphate. It functions in the pathway metabolic intermediate biosynthesis; chorismate biosynthesis; chorismate from D-erythrose 4-phosphate and phosphoenolpyruvate: step 6/7. Its function is as follows. Catalyzes the transfer of the enolpyruvyl moiety of phosphoenolpyruvate (PEP) to the 5-hydroxyl of shikimate-3-phosphate (S3P) to produce enolpyruvyl shikimate-3-phosphate and inorganic phosphate. This is 3-phosphoshikimate 1-carboxyvinyltransferase from Cellvibrio japonicus (strain Ueda107) (Pseudomonas fluorescens subsp. cellulosa).